The primary structure comprises 1935 residues: MATRRATVPEQQQQQPSSPGSEISKNKDGQEQSEMVSPTEEEGFCWPGPKSVALRRASEGFGFTLRHFIVYPPESAVHTTVKDEENGNRGVNAGRPRNRLEPMDTIFVKQVKEGGPAHEAGLCTGDRIIKVNGESVIGKTYSQVIALIQNSDSTLELSVMPKDEDILQLAYSQDAYLKGNDSYSGNAQNIPEPPPICYPRTKPAASVMAQPVEVPPSGTSLTKQQSSRPVRTATTQPDRSYRVEIQVPPSPTDIVKSNTAVCVCNEAVRTVILPSEKVVDLSSNRTNRAGPLHRTEEVRYGLADPSMLKRTTSPPSSTPSVPMVPASRQFDNAGVIGKPPSYGGHSESMFSTRPSQAEESPSPTNHYASPGSHQQIDWRNYKTYKEYIDNRRMQMYGCRTIQERLDSLRAASQNTTDYDQMLPNRSSGQVRRRSTSHDRVPQSVQMRQRSVSQERLEDPVLMKEWPRSASQDTLTSLTVAPRNHRSESWDYLTRKEDFDQFIVDTQSNGEQKHNYKWTGFTEQDDQRGIYEIPRQHSFHMSLRSPNYTMAPLPYPSDSRRAGTRVLAPARPLQKVHPDLKTIQPTRNFQNSYRSPHPRPAVSERLVFPISKSNSVKIPATYASKPYSPSVGSEDGIVKDQKAVNYIHVSGPQNFQRKPQTESALGFQLDSLKTSTSASSSSPAHTKPAKQAKHSTATSQNVDGKKTQSPEANAGDSNSVLTSIDQVVLREKPSPGQQTSQPIRQPSYIFAVSDVEGASDTTCWLPNDARREVHIKRIEQKKASGSDSPGDSLASIPFIDEPTSPSIDHEIANIPASAVISISVQPLPTITTVPPSPTSPVPLIRRHFSHDHDSIRPSILEVNSKTERSKSCDEGLDDYKDEGKLSLKQGSSLKGIKARENVPSSEDSESRKDSSSDVFSDSNKEGFLYFRQLTTEKGKRVSGSMRPWKQMYVVLRGSALYLQKDKKEQSGHSSAQSDEEQLIGINGCLIDISYSETKRKNVFRLTTSDREFLFQAEDRDDMLAWIKAIQENGNLNDEQTDQASRVLISKRIKEYNTMMSSSSNKSEQSPKPSRQTLSIRQPFRATKPEGKLQSPHSPKQESERRLFSKDDISPPKDKGSWRRIMKKPFEKKPTTGGTFGVRLDDCPPAHNNKYVPLIVDVCCKLVEDRGLETTGIYRVPGNNAAISSMQEELNKGSTDIDIQDDKWRDLNVISSLLKSFFRKLPDPLFTNEKYNDFIEANRTEDPVERLKTLKRLILDLPDHHYETLKYLSAHLKAVAENSEKNKMEPRNLAIVFGPTLVRTSEDNMTHMVTHMPDQYKIVETLIQQHDWFFSEESADEPITAVQEESTVESQPVPNIDHLLPNIGRTGLSPGDVSDSASDSAKSKGSWGSGKDQYSRELLVSSLFAAASRKRKKQRDKPQPSSSEDELDNVFYQKELLQVEFQRPDKQNVDKDVDLKANALSLKDADNIKGTNIIKEDKLEKDIMHSEATSPCPPKLSEPPIVNHRLPPDDKNIPQISFQMEESMSDSGTMLSTSSQASAQRSKPKVVSPELKGSDFLTADVSSITSDYSTTSSTIYIVGLDQNLISPEVQSVAESKGEEADDERSELISEGRPMETDSENDFPIFASSIAFDRQHRSKVEEPTRNVQVNSEGSPSCTEGSITPRMDRRRFSSHKLIECDTLSRKKSIRQKTDSECSAESKNEETLSDAQEAVKKGRSLSIGDTTTNNEPEEPAWRIKITERLKLRLKASADDMFGIGSQKAQAAETRKKKNIRRRHTLGGQRDFAEISVLNAWKINEPSSKEAELSAVDRLKPKCPSQDLSISDWLARERLRTSTSELSMVEPEEKRISDATSQKEPASPSPPPASSPSQVSTAIVTAGSESPSQGTAPPPDDQMNGDSFQSKNKNNFSPAVDAHPHKLSGTQVVRSRFYQYL.

The tract at residues 1 to 46 (MATRRATVPEQQQQQPSSPGSEISKNKDGQEQSEMVSPTEEEGFCW) is disordered. The PDZ domain occupies 78-163 (HTTVKDEENG…TLELSVMPKD (86 aa)). Disordered stretches follow at residues 212 to 237 (VEVP…TTQP), 339 to 373 (PPSY…PGSH), 413 to 456 (QNTT…QERL), 673 to 718 (TSTS…DSNS), and 862 to 919 (NSKT…DVFS). 3 stretches are compositionally biased toward polar residues: residues 217–237 (SGTS…TTQP), 348–373 (SMFS…PGSH), and 413–429 (QNTT…SSGQ). Composition is skewed to low complexity over residues 441–451 (PQSVQMRQRSV) and 673–685 (TSTS…PAHT). Residues 708–718 (SPEANAGDSNS) show a composition bias toward polar residues. A compositionally biased stretch (basic and acidic residues) spans 863-884 (SKTERSKSCDEGLDDYKDEGKL). In terms of domain architecture, PH spans 920 to 1033 (DSNKEGFLYF…WIKAIQENGN (114 aa)). A disordered region spans residues 1056–1126 (TMMSSSSNKS…KGSWRRIMKK (71 aa)). The span at 1059–1072 (SSSSNKSEQSPKPS) shows a compositional bias: low complexity. The segment covering 1097-1119 (PKQESERRLFSKDDISPPKDKGS) has biased composition (basic and acidic residues). Positions 1140–1332 (VRLDDCPPAH…TLIQQHDWFF (193 aa)) constitute a Rho-GAP domain. Disordered regions lie at residues 1341–1393 (ITAV…GSGK), 1411–1431 (RKRK…ELDN), 1488–1510 (SEAT…RLPP), 1525–1548 (SMSD…KPKV), 1637–1665 (HRSK…SITP), 1688–1733 (SIRQ…EPEE), and 1838–1925 (SELS…SGTQ). Positions 1345 to 1355 (QEESTVESQPV) are enriched in polar residues. Low complexity predominate over residues 1376–1393 (SDSASDSAKSKGSWGSGK). Polar residues-rich tracts occupy residues 1525 to 1543 (SMSD…SAQR) and 1646 to 1662 (RNVQ…TEGS). Positions 1691–1705 (QKTDSECSAESKNEE) are enriched in basic and acidic residues. Composition is skewed to polar residues over residues 1872 to 1889 (QVST…SQGT) and 1898 to 1911 (NGDS…NNFS).

It localises to the golgi apparatus membrane. The protein localises to the cell junction. It is found in the cytoplasmic vesicle membrane. The protein resides in the cytoplasm. Its subcellular location is the cytoskeleton. Its function is as follows. GTPase-activating protein (GAP) for rhoa and cdc42. The sequence is that of Rho GTPase-activating protein 21 (arhgap21) from Xenopus tropicalis (Western clawed frog).